The following is a 440-amino-acid chain: MPMSTSCPHQPYCEMREQTDMRFISHLTRNTFAIILAGGRGTRLKQLTDFRSKPAVPFAGKFRILDFTLSNCVNSGIRKIGVATQYKAHSLIRHIQRGWSFLDGRFDEFIQLLPAQQQIDETQWYQGTADAVYQNLHFLRRYQPDHILVVAGDHIYKMDYGRMLAHHVKHHADMTVACIDVPLDEAREFGVMGVDEQDRVIDFVEKPQNPPAIPGQPDRALASMGIYIFNTKFLFEQLERDAMTKGSNRDFGKDIIPYIVPRYRVFAHRFADSCVGSDNHRPYWRDVGTIDAYWEANMEMTKVTPELNVYDRDWPIWTYQEQIPPAKFVFDDEDRRGTAVDSLIAGGCIISGASVKRSLLFSSVNVHSWASVEDSVVLPDVDIGRHAVLKRCVIDKHCRIPEGMVIGVDPEEDRKRFHVSPKGITLVTAEMLGQGAAEGR.

Alpha-D-glucose 1-phosphate is bound by residues Tyr125, Gly190, 205–206 (EK), and Ser223.

The protein belongs to the bacterial/plant glucose-1-phosphate adenylyltransferase family. As to quaternary structure, homotetramer.

The enzyme catalyses alpha-D-glucose 1-phosphate + ATP + H(+) = ADP-alpha-D-glucose + diphosphate. Its pathway is glycan biosynthesis; glycogen biosynthesis. Its function is as follows. Involved in the biosynthesis of ADP-glucose, a building block required for the elongation reactions to produce glycogen. Catalyzes the reaction between ATP and alpha-D-glucose 1-phosphate (G1P) to produce pyrophosphate and ADP-Glc. The protein is Glucose-1-phosphate adenylyltransferase of Dechloromonas aromatica (strain RCB).